The following is a 125-amino-acid chain: Fluoride-specific ion channel FluC (125 aa).

3 consecutive transmembrane segments (helical) span residues 36–56 (GTIFVNVVGSFLLSFLMFLSI), 65–85 (FILFFGTGFLGAFTTFSTFAY), and 99–119 (IIYFIANIFLGFFAAILGMFL). Na(+)-binding residues include Gly-75 and Thr-78.

The protein belongs to the fluoride channel Fluc/FEX (TC 1.A.43) family.

It localises to the cell inner membrane. The catalysed reaction is fluoride(in) = fluoride(out). With respect to regulation, na(+) is not transported, but it plays an essential structural role and its presence is essential for fluoride channel function. Functionally, fluoride-specific ion channel. Important for reducing fluoride concentration in the cell, thus reducing its toxicity. In Thermosipho africanus (strain TCF52B), this protein is Fluoride-specific ion channel FluC.